We begin with the raw amino-acid sequence, 226 residues long: Eukaryotic translation initiation factor 3 subunit K (226 aa).

The PCI domain occupies 42-200 (YNLDANLSLL…QLIVLPRNEF (159 aa)).

The protein belongs to the eIF-3 subunit K family. Component of the eukaryotic translation initiation factor 3 (eIF-3) complex.

Its subcellular location is the cytoplasm. Its function is as follows. Component of the eukaryotic translation initiation factor 3 (eIF-3) complex, which is involved in protein synthesis of a specialized repertoire of mRNAs and, together with other initiation factors, stimulates binding of mRNA and methionyl-tRNAi to the 40S ribosome. The eIF-3 complex specifically targets and initiates translation of a subset of mRNAs involved in cell proliferation. The chain is Eukaryotic translation initiation factor 3 subunit K (TIF3K1) from Oryza sativa subsp. japonica (Rice).